We begin with the raw amino-acid sequence, 113 residues long: Hydrogenase maturation factor HybF (113 aa).

Residues His2 and Glu3 each coordinate Ni(2+). Zn(2+) is bound by residues Cys73, Cys76, Cys89, and Cys92.

The protein belongs to the HypA/HybF family. HybF subfamily.

In terms of biological role, involved in the maturation of [NiFe] hydrogenases. Required for nickel insertion into the metal center of the hydrogenase. The protein is Hydrogenase maturation factor HybF of Morganella morganii (Proteus morganii).